We begin with the raw amino-acid sequence, 256 residues long: Ubiquinone/menaquinone biosynthesis C-methyltransferase UbiE (256 aa).

Positions 1–12 (MNDQRKGDHAEP) are enriched in basic and acidic residues. The tract at residues 1–22 (MNDQRKGDHAEPTTHFGYQDVP) is disordered. S-adenosyl-L-methionine is bound by residues Thr-79, Asp-100, and 128–129 (DA).

It belongs to the class I-like SAM-binding methyltransferase superfamily. MenG/UbiE family.

It carries out the reaction a 2-demethylmenaquinol + S-adenosyl-L-methionine = a menaquinol + S-adenosyl-L-homocysteine + H(+). The catalysed reaction is a 2-methoxy-6-(all-trans-polyprenyl)benzene-1,4-diol + S-adenosyl-L-methionine = a 5-methoxy-2-methyl-3-(all-trans-polyprenyl)benzene-1,4-diol + S-adenosyl-L-homocysteine + H(+). It functions in the pathway quinol/quinone metabolism; menaquinone biosynthesis; menaquinol from 1,4-dihydroxy-2-naphthoate: step 2/2. Its pathway is cofactor biosynthesis; ubiquinone biosynthesis. Methyltransferase required for the conversion of demethylmenaquinol (DMKH2) to menaquinol (MKH2) and the conversion of 2-polyprenyl-6-methoxy-1,4-benzoquinol (DDMQH2) to 2-polyprenyl-3-methyl-6-methoxy-1,4-benzoquinol (DMQH2). This chain is Ubiquinone/menaquinone biosynthesis C-methyltransferase UbiE, found in Pseudomonas putida (Arthrobacter siderocapsulatus).